The sequence spans 365 residues: Ribosomal RNA large subunit methyltransferase F (365 aa).

Residues 1–48 (MSKPAVKSVQSATAKTATRAVNIRQKVKAPKQAKPEGKGSTKPVKDRP) form a disordered region. Basic and acidic residues predominate over residues 33–48 (AKPEGKGSTKPVKDRP).

It belongs to the methyltransferase superfamily. METTL16/RlmF family.

It localises to the cytoplasm. It carries out the reaction adenosine(1618) in 23S rRNA + S-adenosyl-L-methionine = N(6)-methyladenosine(1618) in 23S rRNA + S-adenosyl-L-homocysteine + H(+). In terms of biological role, specifically methylates the adenine in position 1618 of 23S rRNA. The sequence is that of Ribosomal RNA large subunit methyltransferase F from Shewanella baltica (strain OS223).